The primary structure comprises 782 residues: DNA repair and recombination protein RAD54-like (782 aa).

Positions 1 to 20 (MRRSLAPSQRGGQRLSSRND) are enriched in polar residues. The segment at 1 to 28 (MRRSLAPSQRGGQRLSSRNDFTPPLLKK) is disordered. The tract at residues 2 to 9 (RRSLAPSQ) is required for chromatin remodeling, strand pairing activities and coupling of ATPase activity. The residue at position 22 (Thr22) is a Phosphothreonine. Positions 168–343 (EGKRGNFNGC…FSLVNFVNPE (176 aa)) constitute a Helicase ATP-binding domain. 181-188 (DEMGLGKT) contributes to the ATP binding site. The DEGH box motif lies at 294–297 (DEGH). The region spanning 501–658 (LLDFMLAAIR…NNESAEKHFT (158 aa)) is the Helicase C-terminal domain. Residues 741 to 753 (SQKIETTPATETS) show a composition bias toward polar residues. The segment at 741-782 (SQKIETTPATETSVEAKPEPERRKRPAMPLSDDSADEDFQGF) is disordered. Residues 773–782 (DSADEDFQGF) show a composition bias toward acidic residues.

Belongs to the SNF2/RAD54 helicase family. Interacts (via N-terminus) with spn-A/Rad51.

It localises to the nucleus. Involved in mitotic DNA repair and meiotic recombination. Functions in the recombinational DNA repair pathway. Essential for interhomolog gene conversion (GC), but may have a less important role in intersister GC than spn-A/Rad51. In the presence of DNA, spn-A/Rad51 enhances the ATPase activity of okr/Rad54. This Drosophila pseudoobscura pseudoobscura (Fruit fly) protein is DNA repair and recombination protein RAD54-like.